The primary structure comprises 181 residues: Der GTPase-activating protein YihI (181 aa).

Positions 1–73 are disordered; it reads MSRIKKARKP…DPRIGSKKPI (73 aa). Basic and acidic residues predominate over residues 22-32; the sequence is NRTDRDVESRE. Over residues 33–42 the composition is skewed to basic residues; it reads IKRKRKRKGL. The span at 55-67 shows a compositional bias: basic and acidic residues; sequence QARRNAQKKDPRI.

It belongs to the YihI family. Interacts with Der.

Its function is as follows. A GTPase-activating protein (GAP) that modifies Der/EngA GTPase function. May play a role in ribosome biogenesis. The chain is Der GTPase-activating protein YihI from Aliivibrio fischeri (strain ATCC 700601 / ES114) (Vibrio fischeri).